A 63-amino-acid polypeptide reads, in one-letter code: MPKIKTHRGAAKRFKQTAGGKWKGSHAFHSHILGKKTAKRKRNLRKVTVISMADARRLKRLLP.

Positions 1–15 are enriched in basic residues; the sequence is MPKIKTHRGAAKRFK. Positions 1 to 26 are disordered; sequence MPKIKTHRGAAKRFKQTAGGKWKGSH.

Belongs to the bacterial ribosomal protein bL35 family.

This is Large ribosomal subunit protein bL35 from Pelotomaculum thermopropionicum (strain DSM 13744 / JCM 10971 / SI).